The chain runs to 365 residues: DNA polymerase IV (365 aa).

The UmuC domain occupies 7 to 188 (IIHIDMDAFY…LPVNKFFGVG (182 aa)). Mg(2+) is bound by residues D11 and D106. E107 is a catalytic residue.

Belongs to the DNA polymerase type-Y family. As to quaternary structure, monomer. Mg(2+) is required as a cofactor.

The protein resides in the cytoplasm. The catalysed reaction is DNA(n) + a 2'-deoxyribonucleoside 5'-triphosphate = DNA(n+1) + diphosphate. Its function is as follows. Poorly processive, error-prone DNA polymerase involved in untargeted mutagenesis. Copies undamaged DNA at stalled replication forks, which arise in vivo from mismatched or misaligned primer ends. These misaligned primers can be extended by PolIV. Exhibits no 3'-5' exonuclease (proofreading) activity. May be involved in translesional synthesis, in conjunction with the beta clamp from PolIII. The sequence is that of DNA polymerase IV from Clostridioides difficile (strain 630) (Peptoclostridium difficile).